A 247-amino-acid chain; its full sequence is UPF0273 protein PH0284 (247 aa).

Positions 3-247 constitute a KaiC domain; it reads RRVKTGIPGV…VLKRGKVLEL (245 aa). An ATP-binding site is contributed by 30 to 37; sequence GGPGTGKT.

This sequence belongs to the UPF0273 family.

In Pyrococcus horikoshii (strain ATCC 700860 / DSM 12428 / JCM 9974 / NBRC 100139 / OT-3), this protein is UPF0273 protein PH0284.